The primary structure comprises 418 residues: Thyroid hormone receptor alpha-A (418 aa).

Residues 1–38 are disordered; that stretch reads MDQNLSGLDCLSEPDEKRWPDGKRKRKNSQCMGKSGMS. The tract at residues 1 to 60 is modulating; sequence MDQNLSGLDCLSEPDEKRWPDGKRKRKNSQCMGKSGMSGDSLVSLPSAGYIPSYLDKDEP. 2 NR C4-type zinc fingers span residues 61-81 and 99-123; these read CVVC…CEGC and CKYD…FKKC. The nuclear receptor DNA-binding region spans 61–135; it reads CVVCSDKATG…VGMAMDLVLD (75 aa). An NR LBD domain is found at 171–415; that stretch reads EEWELIRIVT…PPLFLEVFED (245 aa).

It belongs to the nuclear hormone receptor family. NR1 subfamily. Binds to thyroid hormone receptor element (TRE) weakly as homodimers and monomers, but binds TRE with much higher affinity as heterodimers with retinoid X receptors. Can bind DNA as a heterodimer with either rxra or rxrg.

The protein resides in the nucleus. Functionally, high affinity receptor for triiodothyronine (T3). This is Thyroid hormone receptor alpha-A (thra-a) from Xenopus laevis (African clawed frog).